The chain runs to 275 residues: Gap junction gamma-3 protein (275 aa).

Residues 1–22 are Cytoplasmic-facing; sequence MCGSFLRRVAAEESRHPTPVGR. A helical membrane pass occupies residues 23–43; that stretch reads LLLPALLGLRLVLLAAGGTGV. Residues 44 to 77 are Extracellular-facing; the sequence is FGGGEEQSEFVCHTQQAGCKAVCYDAFHPLSPLR. Residues 78 to 98 traverse the membrane as a helical segment; the sequence is FWAFQVTLVAVPSALYMGFIL. The Cytoplasmic segment spans residues 99–134; it reads YHVIWHWEASEKVKTEEETLSQGEKGGEASRAGSSR. Residues 135-155 traverse the membrane as a helical segment; sequence LLWAYVAQLGVRLALEGAALG. The Extracellular portion of the chain corresponds to 156–196; the sequence is GQYHLYGFRMPSSFVCRLEPCLGSTNCYLSRPSEKSIFLKT. Residues 197 to 217 form a helical membrane-spanning segment; that stretch reads MFGVTGLCLLFTLLELVLLGL. The Cytoplasmic portion of the chain corresponds to 218–275; sequence GRWWRIWRHKSPSSNYSPTSQSAKRCKAPTDNFPVVEIRERPGEAGERGSEVPLSARP. Basic and acidic residues predominate over residues 254–267; sequence EIRERPGEAGERGS. A disordered region spans residues 254–275; sequence EIRERPGEAGERGSEVPLSARP.

This sequence belongs to the connexin family. Gamma-type subfamily. As to quaternary structure, a connexon is composed of a hexamer of connexins.

It is found in the cell membrane. The protein localises to the cell junction. The protein resides in the gap junction. Functionally, one gap junction consists of a cluster of closely packed pairs of transmembrane channels, the connexons, through which materials of low MW diffuse from one cell to a neighboring cell. The polypeptide is Gap junction gamma-3 protein (GJC3) (Bos taurus (Bovine)).